A 170-amino-acid chain; its full sequence is Sec-independent protein translocase protein TatB (170 aa).

Residues 1–21 (MIDFGFDKIALIGAVALIVIG) traverse the membrane as a helical segment. The tract at residues 69–170 (AARNVEQSVS…VARFRPPRPL (102 aa)) is disordered. Residues 73–93 (VEQSVSSEVNRTSSEMNQAWE) show a composition bias toward polar residues. A compositionally biased stretch (basic residues) spans 128-137 (HPRKNWRLKR).

This sequence belongs to the TatB family. The Tat system comprises two distinct complexes: a TatABC complex, containing multiple copies of TatA, TatB and TatC subunits, and a separate TatA complex, containing only TatA subunits. Substrates initially bind to the TatABC complex, which probably triggers association of the separate TatA complex to form the active translocon.

The protein resides in the cell inner membrane. Functionally, part of the twin-arginine translocation (Tat) system that transports large folded proteins containing a characteristic twin-arginine motif in their signal peptide across membranes. Together with TatC, TatB is part of a receptor directly interacting with Tat signal peptides. TatB may form an oligomeric binding site that transiently accommodates folded Tat precursor proteins before their translocation. The protein is Sec-independent protein translocase protein TatB of Methylibium petroleiphilum (strain ATCC BAA-1232 / LMG 22953 / PM1).